A 160-amino-acid polypeptide reads, in one-letter code: 2-C-methyl-D-erythritol 2,4-cyclodiphosphate synthase (160 aa).

Residues Asp9 and His11 each contribute to the a divalent metal cation site. 4-CDP-2-C-methyl-D-erythritol 2-phosphate contacts are provided by residues 9–11 and 35–36; these read DVH and HS. His43 is an a divalent metal cation binding site. 4-CDP-2-C-methyl-D-erythritol 2-phosphate-binding positions include 57 to 59, 62 to 66, 101 to 107, 133 to 136, Phe140, and Arg143; these read DIG, FPDTD, AQKPKMA, and TTTE.

The protein belongs to the IspF family. In terms of assembly, homotrimer. The cofactor is a divalent metal cation.

It carries out the reaction 4-CDP-2-C-methyl-D-erythritol 2-phosphate = 2-C-methyl-D-erythritol 2,4-cyclic diphosphate + CMP. Its pathway is isoprenoid biosynthesis; isopentenyl diphosphate biosynthesis via DXP pathway; isopentenyl diphosphate from 1-deoxy-D-xylulose 5-phosphate: step 4/6. Its function is as follows. Involved in the biosynthesis of isopentenyl diphosphate (IPP) and dimethylallyl diphosphate (DMAPP), two major building blocks of isoprenoid compounds. Catalyzes the conversion of 4-diphosphocytidyl-2-C-methyl-D-erythritol 2-phosphate (CDP-ME2P) to 2-C-methyl-D-erythritol 2,4-cyclodiphosphate (ME-CPP) with a corresponding release of cytidine 5-monophosphate (CMP). This Geobacillus thermodenitrificans (strain NG80-2) protein is 2-C-methyl-D-erythritol 2,4-cyclodiphosphate synthase.